A 514-amino-acid chain; its full sequence is 2-isopropylmalate synthase (514 aa).

The 263-residue stretch at 8–270 folds into the Pyruvate carboxyltransferase domain; it reads IRIFDTTLRD…DCGVVTEQLF (263 aa). Asp17, His205, His207, and Asn241 together coordinate Mn(2+). Residues 394–514 are regulatory domain; the sequence is RLVNLSVQCS…KEEEQEKEGI (121 aa).

This sequence belongs to the alpha-IPM synthase/homocitrate synthase family. LeuA type 1 subfamily. In terms of assembly, homodimer. Requires Mn(2+) as cofactor.

Its subcellular location is the cytoplasm. It carries out the reaction 3-methyl-2-oxobutanoate + acetyl-CoA + H2O = (2S)-2-isopropylmalate + CoA + H(+). The protein operates within amino-acid biosynthesis; L-leucine biosynthesis; L-leucine from 3-methyl-2-oxobutanoate: step 1/4. In terms of biological role, catalyzes the condensation of the acetyl group of acetyl-CoA with 3-methyl-2-oxobutanoate (2-ketoisovalerate) to form 3-carboxy-3-hydroxy-4-methylpentanoate (2-isopropylmalate). The chain is 2-isopropylmalate synthase from Nitratidesulfovibrio vulgaris (strain DSM 19637 / Miyazaki F) (Desulfovibrio vulgaris).